We begin with the raw amino-acid sequence, 1393 residues long: DNA-directed RNA polymerase subunit beta'' (1393 aa).

4 residues coordinate Zn(2+): cysteine 224, cysteine 295, cysteine 302, and cysteine 305.

This sequence belongs to the RNA polymerase beta' chain family. RpoC2 subfamily. As to quaternary structure, in plastids the minimal PEP RNA polymerase catalytic core is composed of four subunits: alpha, beta, beta', and beta''. When a (nuclear-encoded) sigma factor is associated with the core the holoenzyme is formed, which can initiate transcription. Requires Zn(2+) as cofactor.

It localises to the plastid. Its subcellular location is the chloroplast. It carries out the reaction RNA(n) + a ribonucleoside 5'-triphosphate = RNA(n+1) + diphosphate. In terms of biological role, DNA-dependent RNA polymerase catalyzes the transcription of DNA into RNA using the four ribonucleoside triphosphates as substrates. The sequence is that of DNA-directed RNA polymerase subunit beta'' from Manihot esculenta (Cassava).